The chain runs to 618 residues: Proline--tRNA ligase (618 aa).

Belongs to the class-II aminoacyl-tRNA synthetase family. ProS type 1 subfamily. Homodimer.

The protein resides in the cytoplasm. It carries out the reaction tRNA(Pro) + L-proline + ATP = L-prolyl-tRNA(Pro) + AMP + diphosphate. Catalyzes the attachment of proline to tRNA(Pro) in a two-step reaction: proline is first activated by ATP to form Pro-AMP and then transferred to the acceptor end of tRNA(Pro). As ProRS can inadvertently accommodate and process non-cognate amino acids such as alanine and cysteine, to avoid such errors it has two additional distinct editing activities against alanine. One activity is designated as 'pretransfer' editing and involves the tRNA(Pro)-independent hydrolysis of activated Ala-AMP. The other activity is designated 'posttransfer' editing and involves deacylation of mischarged Ala-tRNA(Pro). The misacylated Cys-tRNA(Pro) is not edited by ProRS. This Streptococcus pyogenes serotype M4 (strain MGAS10750) protein is Proline--tRNA ligase.